The primary structure comprises 66 residues: MGMRMMFTVFLLVVLATTVVSSTSGRREFRGRNAAAKASDLVSLTDKKRGCCSDPRCNYDHPEICG.

An N-terminal signal peptide occupies residues Met-1–Gly-25. Positions Arg-26 to Lys-47 are excised as a propeptide. Cystine bridges form between Cys-51–Cys-57 and Cys-52–Cys-65. The interval Ser-53–Pro-55 is ser-Xaa-Pro motif, crucial for potent interaction with nAChR. Key region for inhibition of alpha-9-alpha-10/CHRNA9-CHRNA10 nAChR stretches follow at residues Asp-54 to Arg-56 and Asp-60 to Ile-64. Pro-55 is subject to 4-hydroxyproline. Glu-63 carries the post-translational modification 4-carboxyglutamate. Cys-65 is subject to Cysteine amide.

Belongs to the conotoxin A superfamily. Post-translationally, vc1.1 is described as having no post-translational modifications (except C-terminal amidation), whereas Vc1a contains a hydroxyproline at Pro-55 and a 4-carboxyglutamate at Glu-63 (and a C-terminal amidation). In terms of processing, hydroxylation of Pro-55 is not important for inhibition of alpha-9-alpha-10/CHRNA9-CHRNA10 nAChRs, since [P6O]Vc1.1 (Pro-55 hydroxylated) shows similar inhibition than native toxin (IC(50)=99.1 nM). In contrast, hydroxylation of Pro-55 seems to impair inhibition of HVA calcium channel currents, since [P6O]Vc1.1 has no effect on HVA calcium channel currents. In vivo, hydroxylation of Pro-55 seems to induce the loss of analgesic effects in rat models of neuropathic pain, since [P6O]Vc1.1 has no effect on mechanical allodynia. Gamma-carboxylation of Glu-63 is not important for inhibition of alpha-9-alpha-10/CHRNA9-CHRNA10 nAChRs, since [E14gamma]Vc1.1 (carboxyglutamate at Glu-63) shows similar inhibition than native toxin (IC(50)=65.3 nM). In contrast, gamma-carboxylation of Glu-63 seems to impair inhibition of HVA calcium channel currents, since [E14gamma]Vc1.1 has no effect on HVA calcium channel currents. Post-translationally, non-native isomers 'ribbon' (with disulfide connectivity C1-C4; C2-C3) and 'beads' (with disulfide connectivity C1-C2; C3-C4) of Vc1.1 also inhibit HVA calcium channel currents in rat DRG neurons (20-30% inhibition at 1 uM toxin). It has been shown that both reduced and alkylated Vc1.1 have no effect on HVA calcium channel currents. The observed activity can be attributed to specific isomers. In terms of processing, [C3S]Vc1.1(1-8) mutant is C-terminally amidated. Expressed by the venom duct.

The protein resides in the secreted. Its function is as follows. Alpha-conotoxins act on postsynaptic membranes, they bind to the nicotinic acetylcholine receptors (nAChR) and thus inhibit them. This toxin (native toxin Vc1a; hydroxylated and gamma-carboxylated) blocks alpha-9-alpha-10/CHRNA9-CHRNA10 nAChRs (IC(50)=62.9 nM). In contrast to the non-post-translationally modified analog Vc1.1, Vc1a does not inhibit high voltage-activated (HVA) calcium channel currents. In vivo, in contrast to Vc1.1, Vc1a does not show analgesic effects in rat models of neuropathic pain. The synthetic peptide Vc1.1 (a non-hydroxylated and non-gamma-carboxylated analog of Vc1a) has two types of targets. It blocks alpha-9-alpha-10/CHRNA9-CHRNA10 nAChRs (on rat receptors, IC(50)=19-109 nM) (with preference for rat over human receptors) and inhibits high voltage-activated (HVA) calcium channel (Cav2.2, Cav2.3) currents by acting on GABA(B) receptors (GABBR1 and GABBR2) (IC(50)=1.7 nM). It also shows moderate inhibition on alpha-6/alpha-3-beta-2-beta-3 (CHRNA6/CHRNA3-CHRNB2-CHRNB3) (IC(50)=140 nM) and alpha-6/alpha-3-beta-4 (CHRNA6/CHRNA3-CHRNB4) (IC(50)=980 nM). On alpha-9-alpha-10/CHRNA9-CHRNA10 nAChR, it most likely interacts with the alpha-10(+)/alpha-9(-)interface of the receptor. In vivo, it acts as a powerful analgesic in rat models of neuropathic pain. The chain is Alpha-conotoxin Vc1a from Conus victoriae (Queen Victoria cone).